A 1787-amino-acid polypeptide reads, in one-letter code: MSDDQHESIDGDETMEEDSMLAEGHEDGEEDVGEDEEEVETEESQGVPTTSEKKKPPPKKKKGGKKSSKKKNNCDYPDPYKSTSAEISAAIGLTDVDVDYEQEEFQSITNLKNFSSLVKPYILKVNPGTNVTKMYPLFQVKYKEFQDHMTAHGKSIQKQQRAKFVPVPVPVTPQEKIIPQKTRSSARRKRRDGSDGEGGGHDSDQEFEALIKQHEKQQDEAEKGKEEARINRAAAKVDKRKAALESARASKRARKEQGVVEENHQENCEVCNQDGELMLCDTCTRAYHVACIDENMEQPPEGDWSCPHCEEHGPDVLIVEEEPAKANMDYCRICKETSNILLCDTCPSSYHAYCIDPPLTEIPEGEWSCPRCIIPEPAQRIEKILSWRWKEISYPEPLECKEGEEASKDDVFLKPPRKMEPRREREFFVKWKYLAYWQCEWLSETLMDVYFTALVRMYWRKVDSENPPIFEESTLSRHHSDHDPYKLRERFYQYGVKPEWMQIHRIINHLSYAKSQQDYLVKWKELSYEHATWERDDTDIANYEDAIIKYWHHRERMLNDEVPRNVQKMIAKQREAKGLGPKEDEVTSRRKKREKIDILKKYEVQPDFISETGGNLHPYQLEGINWLRHCWSNGTDAILADEMGLGKTVQSLTFLYTLMKEGHTKGPFLIAAPLSTIINWEREAELWCPDFYVVTYVGDRESRMVIREHEFSFVDGAVRGGPKVSKIKTLENLKFHVLLTSYECINMDKAILSSIDWAALVVDEAHRLKNNQSTFFKNLREYNIQYRVLLTGTPLQNNLEELFHLLNFLAPDRFNQLESFTAEFSEISKEDQIEKLHNLLGPHMLRRLKADVLTGMPSKQELIVRVELSAMQKKYYKNILTRNFDALNVKNGGTQMSLINIIMELKKCCNHPYLFMKACLEAPKLKNGMYEGSALIKNAGKFVLLQKMLRKLKDGGHRVLIFSQMTMMLDILEDFCDVEGYKYERIDGSITGQQRQDAIDRYNAPGAKQFVFLLSTRAGGLGINLATADTVIIYDSDWNPHNDIQAFSRAHRLGQKHKVMIYRFVTKGSVEERITSVAKKKMLLTHLVVRAGLGAKDGKSMSKTELDDVLRWGTEELFKEEEAPVEGADGEGTSSKKPNEQEIVWDDAAVDFLLDRNKEEEGQDGEKKEHWTNEYLSSFKVATYNTKEADDADDDEDETEVIKEGTEEQDPNYWEKLLKHHYEQDQETELQKLGKGKRVRRQVNYASENMGQDWSAQNNQQQEEDDGSEYGSDNGELLQTDEDYEERRRRREERSEKLPPLLAKVNGQIEVLGFNPRQRKAFYNAVMRWGMPPQDLTQSSWQVRDLRNKSEKVFKAYSSLFMRHLCEPVVDNSDSFMDGVPREGLNRQAVLSRIGLMSILRKKVQEFEKFNGEWSMPETREKMLATAAQASVSNLPGMIKIKEEPIDIDETPMDVDQSNITKTEELASEVKVEEEPKAPRLPYKFNICDGGYTELHSLWINEEKVARNGKEYEIWHRRHDFWLLAAVAVYGYGRYQINFQDIMNDPKFSIVNEPFKQTGADPATNFADVKNKFLARRFKLLEQSLVIEEQLRRAAHINKQQSPDQVGQLAQHFSELEHTADAHVNIARESNNGNRNANAILHKCLAQLDDLLSDLKTDVARLPATISQVRPVTERLQMSERQILSRLVVAKDPDAAPSKPALPPSGPFITPLFNQNFTTIQPKFPSLFDCNLSPDDEPIDIEGSISAAVAEASRASSIAATKDEPMDTSDKDIPSTSAAAGSSYPRY.

Disordered regions lie at residues 1–80 and 170–258; these read MSDD…PDPY and PVTP…KEQG. A compositionally biased stretch (acidic residues) spans 10–43; that stretch reads DGDETMEEDSMLAEGHEDGEEDVGEDEEEVETEE. Over residues 56–71 the composition is skewed to basic residues; that stretch reads PPPKKKKGGKKSSKKK. Residues 192–243 are compositionally biased toward basic and acidic residues; it reads DGSDGEGGGHDSDQEFEALIKQHEKQQDEAEKGKEEARINRAAAKVDKRKAA. 2 consecutive PHD-type zinc fingers follow at residues 265 to 312 and 328 to 375; these read QENC…CEEH and MDYC…CIIP. Chromo domains lie at 373–476 and 501–583; these read IIPE…STLS and MQIH…GPKE. The 185-residue stretch at 628 to 812 folds into the Helicase ATP-binding domain; that stretch reads RHCWSNGTDA…FHLLNFLAPD (185 aa). 641–648 contacts ATP; it reads DEMGLGKT. The short motif at 763 to 766 is the DEAH box element; sequence DEAH. Residues 944 to 1107 enclose the Helicase C-terminal domain; sequence LLQKMLRKLK…GKSMSKTELD (164 aa). 4 disordered regions span residues 1120–1141, 1186–1212, 1248–1295, and 1754–1787; these read EEEA…PNEQ, TKEA…QDPN, ENMG…EERS, and RASS…YPRY. Positions 1190–1199 are enriched in acidic residues; the sequence is DDADDDEDET. Positions 1248 to 1261 are enriched in polar residues; it reads ENMGQDWSAQNNQQ. Residues 1761 to 1773 show a composition bias toward basic and acidic residues; it reads TKDEPMDTSDKDI.

It belongs to the SNF2/RAD54 helicase family. In terms of tissue distribution, expressed in the head and vulva.

It localises to the nucleus. The enzyme catalyses ATP + H2O = ADP + phosphate + H(+). Functionally, ATP-dependent chromatin-remodeling factor that has a role in notch signaling-dependent vulval cell fate determination. May also have a role in pharyngeal precursor cell specification. This Caenorhabditis elegans protein is Chromodomain-helicase-DNA-binding protein 3 homolog (chd-3).